The chain runs to 436 residues: Serine hydroxymethyltransferase (436 aa).

(6S)-5,6,7,8-tetrahydrofolate is bound by residues Leu-133 and 137–139; that span reads GHL. The residue at position 242 (Lys-242) is an N6-(pyridoxal phosphate)lysine. 366 to 368 lines the (6S)-5,6,7,8-tetrahydrofolate pocket; that stretch reads SPF.

Belongs to the SHMT family. In terms of assembly, homodimer. The cofactor is pyridoxal 5'-phosphate.

The protein resides in the cytoplasm. The enzyme catalyses (6R)-5,10-methylene-5,6,7,8-tetrahydrofolate + glycine + H2O = (6S)-5,6,7,8-tetrahydrofolate + L-serine. It participates in one-carbon metabolism; tetrahydrofolate interconversion. It functions in the pathway amino-acid biosynthesis; glycine biosynthesis; glycine from L-serine: step 1/1. Functionally, catalyzes the reversible interconversion of serine and glycine with tetrahydrofolate (THF) serving as the one-carbon carrier. This reaction serves as the major source of one-carbon groups required for the biosynthesis of purines, thymidylate, methionine, and other important biomolecules. Also exhibits THF-independent aldolase activity toward beta-hydroxyamino acids, producing glycine and aldehydes, via a retro-aldol mechanism. The protein is Serine hydroxymethyltransferase of Novosphingobium aromaticivorans (strain ATCC 700278 / DSM 12444 / CCUG 56034 / CIP 105152 / NBRC 16084 / F199).